The primary structure comprises 1045 residues: E3 ubiquitin-protein ligase Topors (1045 aa).

Residues 1-35 form a disordered region; the sequence is MGSQPPLGSPLSREEGEAPPPAPASEGRRRSRRVR. The tract at residues 1–195 is E3 ubiquitin-protein ligase activity; it reads MGSQPPLGSP…RERNASVYSP (195 aa). The segment at 51 to 374 is required for DNA-binding; the sequence is ELAASAPARP…MAAFDQHANY (324 aa). Glycyl lysine isopeptide (Lys-Gly) (interchain with G-Cter in SUMO2) cross-links involve residues Lys73, Lys76, Lys83, and Lys88. The residue at position 98 (Ser98) is a Phosphoserine. Residues 103 to 142 form an RING-type zinc finger; that stretch reads CPICLDRFDNVSYLDRCLHKFCFRCVQEWSKNKAECPLCK. Lys159 participates in a covalent cross-link: Glycyl lysine isopeptide (Lys-Gly) (interchain with G-Cter in SUMO2). The residue at position 194 (Ser194) is a Phosphoserine. Lys249 participates in a covalent cross-link: Glycyl lysine isopeptide (Lys-Gly) (interchain with G-Cter in SUMO2). Residues 437–574 are required for sumoylation and localization to discrete nuclear foci; the sequence is SLLNTSDSSD…STSLSSPRNL (138 aa). Residues 437–654 form an interaction with SUMO1 region; sequence SLLNTSDSSD…RSRTRDSSWS (218 aa). The interval 442–475 is disordered; that stretch reads SDSSDEELVTGGATSQIQGVQTNDDLNNDSDDSS. Over residues 453-463 the composition is skewed to polar residues; it reads GATSQIQGVQT. Positions 456-731 are interaction with p53/TP53; that stretch reads SQIQGVQTND…RRTLSRAHYS (276 aa). Positions 456–882 are interaction with TOP1; it reads SQIQGVQTND…GKATDTTKHH (427 aa). Residue Ser499 is modified to Phosphoserine. The tract at residues 511–692 is disordered; it reads ETVKTQEQEQ…RSRNRDRYYL (182 aa). The span at 521–534 shows a compositional bias: low complexity; the sequence is SYSSGDSDVSRCSS. Over residues 539–565 the composition is skewed to basic and acidic residues; it reads LGKDEQINKGHCDSSTRIKSKKEEKRS. A Glycyl lysine isopeptide (Lys-Gly) (interchain with G-Cter in SUMO) cross-link involves residue Lys560. Over residues 566–578 the composition is skewed to polar residues; it reads TSLSSPRNLNSSV. Phosphoserine is present on Ser585. Composition is skewed to basic residues over residues 588 to 597, 613 to 630, and 637 to 647; these read NHRHRKRGRS, KNHRKHHGKKRMKSKRSR, and PRGRRDKKRSR. Low complexity predominate over residues 654 to 669; it reads SRRSQTLSLSSESTSR. Lys701 is covalently cross-linked (Glycyl lysine isopeptide (Lys-Gly) (interchain with G-Cter in SUMO2)). The tract at residues 713–936 is disordered; it reads RDGYESSYRR…DNSGPQDPLQ (224 aa). Ser718 bears the Phosphoserine; by PLK1 mark. The span at 721–730 shows a compositional bias: basic residues; the sequence is RRRTLSRAHY. Residues 731-747 show a composition bias toward polar residues; it reads SRQSSSPEFRVQSFSER. A Phosphoserine modification is found at Ser734. Composition is skewed to basic and acidic residues over residues 755–766 and 816–825; these read NHSERKYYYYER and FASKAKDSHY. Residues Lys819 and Lys837 each participate in a glycyl lysine isopeptide (Lys-Gly) (interchain with G-Cter in SUMO2) cross-link. Basic residues predominate over residues 854 to 863; that stretch reads KHKRRKRKTR. The interaction with UBE2I stretch occupies residues 854–917; the sequence is KHKRRKRKTR…ITIDSDSDKD (64 aa). Ser864 and Ser866 each carry phosphoserine. Residues 880-897 show a composition bias toward basic residues; that stretch reads KHHKKKKKKHKKKHKKHH. A phosphoserine mark is found at Ser912, Ser914, and Ser1028. The segment covering 913–923 has biased composition (basic and acidic residues); the sequence is DSDKDSEVKED.

Interacts with PARK7/DJ-1. Interacts with TOP1. Interacts with p53/TP53; can both ubiquitinate and sumoylate p53/TP53. Interacts with the SUMO1 conjugating enzyme UBE2I. Interacts with SUMO1. Interacts with NKX3-1; polyubiquitinates NKX3-1 and induces its proteasomal degradation. Interacts with SIN3A; sumoylates SIN3A. Interacts with IKBKE; induced by DNA damage. In terms of processing, phosphorylation at Ser-98 regulates the E3 ubiquitin-protein ligase activity but not the SUMO1-protein ligase activity. Phosphorylation at Ser-718 increases the E3 ubiquitin-protein ligase activity versus the SUMO1-protein ligase activity resulting in increased p53/TP53 ubiquitination and degradation. Post-translationally, sumoylated. In terms of tissue distribution, expressed at highest levels in testis and at lower levels in adrenal gland, bone marrow, brain, colon, heart, kidney, liver, muscle, ovary, pancreas, placenta, prostate, skeletal muscle, skin, small intestine, spleen, stomach, testis, thymus, thyroid and uterus. Expressed in the alveolar epithelium of the lung. Expression is commonly decreased in colon adenocarcinomas and lung cancers.

The protein localises to the nucleus. The protein resides in the PML body. It catalyses the reaction S-ubiquitinyl-[E2 ubiquitin-conjugating enzyme]-L-cysteine + [acceptor protein]-L-lysine = [E2 ubiquitin-conjugating enzyme]-L-cysteine + N(6)-ubiquitinyl-[acceptor protein]-L-lysine.. Its function is as follows. Functions as an E3 ubiquitin-protein ligase and as an E3 SUMO1-protein ligase. Probable tumor suppressor involved in cell growth, cell proliferation and apoptosis that regulates p53/TP53 stability through ubiquitin-dependent degradation. May regulate chromatin modification through sumoylation of several chromatin modification-associated proteins. May be involved in DNA damage-induced cell death through IKBKE sumoylation. The chain is E3 ubiquitin-protein ligase Topors (TOPORS) from Homo sapiens (Human).